Here is a 394-residue protein sequence, read N- to C-terminus: Elongation factor Tu (394 aa).

The region spanning 10–204 (KPHVNVGTIG…HLDTYIPEPE (195 aa)) is the tr-type G domain. The tract at residues 19-26 (GHVDHGKT) is G1. Residue 19–26 (GHVDHGKT) coordinates GTP. T26 serves as a coordination point for Mg(2+). A G2 region spans residues 60 to 64 (GITIN). A G3 region spans residues 81–84 (DCPG). Residues 81–85 (DCPGH) and 136–139 (NKCD) each bind GTP. Residues 136–139 (NKCD) form a G4 region. A G5 region spans residues 174 to 176 (SAL).

Belongs to the TRAFAC class translation factor GTPase superfamily. Classic translation factor GTPase family. EF-Tu/EF-1A subfamily. In terms of assembly, monomer.

It localises to the cytoplasm. It carries out the reaction GTP + H2O = GDP + phosphate + H(+). GTP hydrolase that promotes the GTP-dependent binding of aminoacyl-tRNA to the A-site of ribosomes during protein biosynthesis. The sequence is that of Elongation factor Tu from Aeromonas hydrophila subsp. hydrophila (strain ATCC 7966 / DSM 30187 / BCRC 13018 / CCUG 14551 / JCM 1027 / KCTC 2358 / NCIMB 9240 / NCTC 8049).